A 224-amino-acid chain; its full sequence is Deoxyribose-phosphate aldolase (224 aa).

The active-site Proton donor/acceptor is the Asp92. Lys154 functions as the Schiff-base intermediate with acetaldehyde in the catalytic mechanism. The active-site Proton donor/acceptor is the Lys183.

Belongs to the DeoC/FbaB aldolase family. DeoC type 1 subfamily.

Its subcellular location is the cytoplasm. The enzyme catalyses 2-deoxy-D-ribose 5-phosphate = D-glyceraldehyde 3-phosphate + acetaldehyde. It participates in carbohydrate degradation; 2-deoxy-D-ribose 1-phosphate degradation; D-glyceraldehyde 3-phosphate and acetaldehyde from 2-deoxy-alpha-D-ribose 1-phosphate: step 2/2. In terms of biological role, catalyzes a reversible aldol reaction between acetaldehyde and D-glyceraldehyde 3-phosphate to generate 2-deoxy-D-ribose 5-phosphate. The polypeptide is Deoxyribose-phosphate aldolase (Histophilus somni (strain 129Pt) (Haemophilus somnus)).